Here is a 113-residue protein sequence, read N- to C-terminus: U11-theraphotoxin-Hhn1a (113 aa).

An N-terminal signal peptide occupies residues 1-21 (MNTVRVTFLPVFVLAVSLGQA). Residues 22 to 74 (DKDENRMEMQEKTEQGKSYLDFAENLLLQKLEELEAKLLEEDSEESRNSRQKR) constitute a propeptide that is removed on maturation. The interval 61–83 (EEDSEESRNSRQKRCIGEGVPCD) is disordered. Disulfide bonds link cysteine 75/cysteine 90, cysteine 82/cysteine 95, and cysteine 89/cysteine 110.

It belongs to the neurotoxin 14 (magi-1) family. 01 (HNTX-16) subfamily. As to expression, expressed by the venom gland.

Its subcellular location is the secreted. This is U11-theraphotoxin-Hhn1a from Cyriopagopus hainanus (Chinese bird spider).